The sequence spans 270 residues: Putative ABC transporter ATP-binding protein MG304 (270 aa).

The region spanning 1-232 is the ABC transporter domain; the sequence is MLQVKNLSFK…LDLFHNHHFN (232 aa). 36–43 contacts ATP; it reads GHNGSGKS.

Belongs to the ABC transporter superfamily.

This Mycoplasma genitalium (strain ATCC 33530 / DSM 19775 / NCTC 10195 / G37) (Mycoplasmoides genitalium) protein is Putative ABC transporter ATP-binding protein MG304.